We begin with the raw amino-acid sequence, 213 residues long: uncharacterized protein (213 aa).

Coiled-coil stretches lie at residues 54–78 (KEQT…NLKL) and 108–151 (VKDV…STSK). Residues 122-142 (IEKEKEEEKAAKKAEKAEEKK) are compositionally biased toward basic and acidic residues. The tract at residues 122–213 (IEKEKEEEKA…FGGKPTGQIW (92 aa)) is disordered. Low complexity predominate over residues 146–188 (KNSTSKSGSKSSKSSSGSSKSSSKSSKSSKSSSGSSKSSSKSS). Over residues 189–199 (KNSKKSSKKSN) the composition is skewed to basic residues.

Belongs to the mimivirus R546 family.

This is an uncharacterized protein from Acanthamoeba polyphaga (Amoeba).